The sequence spans 695 residues: MAFETFSVALDKDKTLIFETGKIARQASGAILVKMNETWVFSSACAASLSEAVDFLPFRVDYQEKFSSAGRTSGGFLKREGRPSEREILVSRLIDRSLRPSFPNRLMQDIQVLSYVWSYDGKTLPDPLAICGASAALAISEVPQNCIIAGVRVGLVGGKWVINPTRDELSASKLDLVMAGTASAVLMIEGHCDFLTEEQVLEAIAFGQTYIAKICDAIEAWQKATGKQKNFSAVLDMPEDVQNVVSDFIREKFEKALSFRDKEALEQASKELEESVIANLVQEENSDFSLLNVKAAFKTAKSNQMRALIQDLGIRVDGRTTTEIRPISIETPFLPRTHGSCLFTRGETQSMAVCTLGGENMAQRFEDLNGDGAARFYLQYFFPPFSVGEVGRIGSPGRREIGHGKLAEKALSHVLPETSRFPYIIRLESNITESNGSSSMASVCGGCLALMDAGVPIKAPVAGIAMGLILDRDQAIILSDISGIEDHLGDMDFKVAGTAKGITAFQMDIKIEGITHKIMEQALAQAKQGRSHILNLMTQVLASPKGTVSKYAPRIETMQINTSKIATVIGPGGKQIRQIIERSGAQVDINDDGVINIAASTQESINKAKELIEGLTGEVEVGKVYNGRVTSIATFGVFVEVLPGKEGLCHISELSKQKVDNISDFVKEGDKLAVKLLSINEKGQLKLSHKATLED.

Residues Asp486 and Asp492 each contribute to the Mg(2+) site. Residues 553 to 612 enclose the KH domain; it reads PRIETMQINTSKIATVIGPGGKQIRQIIERSGAQVDINDDGVINIAASTQESINKAKELI. Positions 622-690 constitute an S1 motif domain; the sequence is GKVYNGRVTS…EKGQLKLSHK (69 aa).

Belongs to the polyribonucleotide nucleotidyltransferase family. Mg(2+) is required as a cofactor.

Its subcellular location is the cytoplasm. The enzyme catalyses RNA(n+1) + phosphate = RNA(n) + a ribonucleoside 5'-diphosphate. Involved in mRNA degradation. Catalyzes the phosphorolysis of single-stranded polyribonucleotides processively in the 3'- to 5'-direction. The chain is Polyribonucleotide nucleotidyltransferase from Chlamydia trachomatis serovar A (strain ATCC VR-571B / DSM 19440 / HAR-13).